A 327-amino-acid polypeptide reads, in one-letter code: Mitochondrial substrate carrier family protein A (327 aa).

The interval 1-36 (MVINNQNNNNQNNNQNNNNKNDNLNNSTTTTTTTAT) is disordered. The Mitochondrial intermembrane portion of the chain corresponds to 1–48 (MVINNQNNNNQNNNQNNNNKNDNLNNSTTTTTTTATTTKSSTLFHSND). Solcar repeat units lie at residues 43–132 (LFHS…FKRM), 140–224 (ISVI…IKEK), and 233–323 (PPLY…AITL). Residues 49 to 66 (FFSGLIAGIVSRTLTAPL) traverse the membrane as a helical segment. Topologically, residues 67-106 (ERIKILNQVEVILKDGTKYNRIIPAFKVIIKEEGIAGLFR) are mitochondrial matrix. Residues 107–127 (GNFVNIIKAGPQSAIRFYSYG) form a helical membrane-spanning segment. The Mitochondrial intermembrane segment spans residues 128–145 (AFKRMASEPDGSISVINR). Residues 146-166 (MWAGASSGVVSVALTHPLDVI) form a helical membrane-spanning segment. Over 167-192 (KTHITVIAPTAATIKNVTKGIYRDLG) the chain is Mitochondrial matrix. Residues 193–213 (IIGFFRGLSAGILNIAPFAAL) traverse the membrane as a helical segment. Topologically, residues 214-238 (NFTFYETIKEKTQQYILKSPPLYAP) are mitochondrial intermembrane. The helical transmembrane segment at 239-259 (SIYGAISGGLTMTILYPLDVV) threads the bilayer. Residues 260–303 (KRRIMLQHFDRNQLPIYKNFIDAIIKITKTEGISALYKGIRPAY) lie on the Mitochondrial matrix side of the membrane. The chain crosses the membrane as a helical span at residues 304 to 324 (LKVIPTVSINFLIYEGAITLF). Topologically, residues 325–327 (EKK) are mitochondrial intermembrane.

It belongs to the mitochondrial carrier (TC 2.A.29) family.

It localises to the mitochondrion inner membrane. Functionally, calcium-dependent mitochondrial solute carrier. Mitochondrial solute carriers shuttle metabolites, nucleotides, and cofactors through the mitochondrial inner membrane. The protein is Mitochondrial substrate carrier family protein A (mcfA) of Dictyostelium discoideum (Social amoeba).